A 131-amino-acid polypeptide reads, in one-letter code: uncharacterized protein (131 aa).

The next 4 helical transmembrane spans lie at 7-29 (LLKF…SLLY), 49-69 (LVKV…LIAL), 76-98 (LILI…LFTY), and 102-124 (ELSE…FLYL).

Its subcellular location is the cell membrane. This is an uncharacterized protein from Aquifex aeolicus (strain VF5).